Here is a 506-residue protein sequence, read N- to C-terminus: MLLPRGFNRAVVTALGVVGTGTLVAAGPCDIYSSGGTPCVAAHSTTRALYSAYTGPLYQVKRGSDGATTNIAPLSAGGVANAAAQDSFCAGTTCLITIIYDQSGRGNHLTQAPPGGFKGPEANGYDNLASAIGAPVTLNGQKAYGVFISPGTGYRNNAASGTATGDAPEGMYAVLDGTHYNGGCCFDYGNAETSSTDTGNGHMEAIYFGDNTVWGSGSGSGPWIMADLENGLFSGSSTKNNAGDPSVSYRFLTAIVKGKPNQWAIRGANAASGSLSTYYNGARPNASGYNPMSKEGAIILGIGGDNSIGAQGTFYEGVMTSGYPSDATENSVQANIVAAKYAVAPLTSGPSLTVGSSISLRATTSCCTTRYLAHNGSTVNTQVVSSSSSTALKQQASWTVRAGLANSACFSFESKDTPGSFIRHYDFVLQLSANDGTKQFYEDATFCPQSGLNGQGSSIRSWNYPTRYFRHYNNVLYAASNGGVHTFDATGSFNDDVSWVVSTSFA.

Positions 1–26 (MLLPRGFNRAVVTALGVVGTGTLVAA) are cleaved as a signal peptide. Positions 27 to 343 (GPCDIYSSGG…ANIVAAKYAV (317 aa)) are catalytic. 3 cysteine pairs are disulfide-bonded: Cys29–Cys39, Cys89–Cys94, and Cys184–Cys185. Asp227 is a substrate binding site. Residue Glu229 is the Nucleophile of the active site. Residue Asn230 coordinates substrate. A glycan (N-linked (GlcNAc...) asparagine) is linked at Asn285. Substrate is bound at residue Gly304. The active-site Proton donor is the Asp305. Positions 344–506 (APLTSGPSLT…VSWVVSTSFA (163 aa)) are ABD. Residue Asn375 is glycosylated (N-linked (GlcNAc...) asparagine). A disulfide bridge links Cys409 with Cys447. The substrate site is built by His424, Phe427, Asp443, His471, Leu476, and Asp496.

Belongs to the glycosyl hydrolase 54 family.

The protein resides in the secreted. The enzyme catalyses Hydrolysis of terminal non-reducing alpha-L-arabinofuranoside residues in alpha-L-arabinosides.. Its pathway is glycan metabolism; L-arabinan degradation. Functionally, alpha-L-arabinofuranosidase involved in the degradation of arabinoxylan, a major component of plant hemicellulose. Able to hydrolyze 1,5-, 1,3- and 1,2-alpha-linkages not only in L-arabinofuranosyl oligosaccharides, but also in polysaccharides containing terminal non-reducing L-arabinofuranoses in side chains, like L-arabinan, arabinogalactan and arabinoxylan. This Aspergillus terreus (strain NIH 2624 / FGSC A1156) protein is Probable alpha-L-arabinofuranosidase B (abfB).